The chain runs to 198 residues: 3-isopropylmalate dehydratase small subunit (198 aa).

It belongs to the LeuD family. LeuD type 1 subfamily. As to quaternary structure, heterodimer of LeuC and LeuD.

The catalysed reaction is (2R,3S)-3-isopropylmalate = (2S)-2-isopropylmalate. The protein operates within amino-acid biosynthesis; L-leucine biosynthesis; L-leucine from 3-methyl-2-oxobutanoate: step 2/4. Catalyzes the isomerization between 2-isopropylmalate and 3-isopropylmalate, via the formation of 2-isopropylmaleate. In Mycolicibacterium paratuberculosis (strain ATCC BAA-968 / K-10) (Mycobacterium paratuberculosis), this protein is 3-isopropylmalate dehydratase small subunit.